Reading from the N-terminus, the 225-residue chain is PKHD-type hydroxylase YbiX (225 aa).

Positions 78–177 (TLSTPLFNRY…RVASFMWIQS (100 aa)) constitute a Fe2OG dioxygenase domain. Residues His96, Asp98, and His158 each contribute to the Fe cation site. Position 168 (Arg168) interacts with 2-oxoglutarate.

Fe(2+) serves as cofactor. It depends on L-ascorbate as a cofactor.

The polypeptide is PKHD-type hydroxylase YbiX (Escherichia coli O8 (strain IAI1)).